A 383-amino-acid polypeptide reads, in one-letter code: MSVTTLNGQPTLNISGPGQTALSRLDPLKKVFTKFFSSIPQKVRGHVVAVIGELIGTTAFLFIAFSAAEVALASANDNKGDKVSYETKSISTTQILFIAFGAGISLVVNAWTFFRISGGLFDPAVSIALFFVGAIDLTRCVLLCIAQCLGAIAASAMAYGLYHGGLHTATTLKPGMSPAQGVIVEMILTCQLCFTVLMLAAEKHEATFLAPLGIGLSVFIGELAGVFWTGGSMNPARSLGPAVVTLSFPSYHWIYWVGPIAGAGLASIIYKLIKALEYETAQLSEGEMHAHPVEDSEKASGHTGPCECMCFKVAAQGQSSAASTLQVATTDARKSSSLVPTKSTKSGNSEVKKTETVVEEPAKTQPKPAPAADDGFFGEMYAD.

The Cytoplasmic portion of the chain corresponds to 1–46 (MSVTTLNGQPTLNISGPGQTALSRLDPLKKVFTKFFSSIPQKVRGH). The chain crosses the membrane as a helical span at residues 47–67 (VVAVIGELIGTTAFLFIAFSA). Residues 68–93 (AEVALASANDNKGDKVSYETKSISTT) are Extracellular-facing. A helical transmembrane segment spans residues 94-114 (QILFIAFGAGISLVVNAWTFF). A topological domain (cytoplasmic) is located at residue Arg115. A helical transmembrane segment spans residues 116 to 136 (ISGGLFDPAVSIALFFVGAID). The NPA 1 signature appears at 122–124 (DPA). Over 137–140 (LTRC) the chain is Extracellular. A helical membrane pass occupies residues 141 to 161 (VLLCIAQCLGAIAASAMAYGL). Topologically, residues 162–180 (YHGGLHTATTLKPGMSPAQ) are cytoplasmic. The helical transmembrane segment at 181-201 (GVIVEMILTCQLCFTVLMLAA) threads the bilayer. Residues 202-207 (EKHEAT) lie on the Extracellular side of the membrane. Residues 208–228 (FLAPLGIGLSVFIGELAGVFW) form a helical membrane-spanning segment. Over 229 to 252 (TGGSMNPARSLGPAVVTLSFPSYH) the chain is Cytoplasmic. An NPA 2 motif is present at residues 234-236 (NPA). The helical transmembrane segment at 253–273 (WIYWVGPIAGAGLASIIYKLI) threads the bilayer. Residues 274–383 (KALEYETAQL…DGFFGEMYAD (110 aa)) are Extracellular-facing. Residues 332–349 (ARKSSSLVPTKSTKSGNS) are compositionally biased toward polar residues. The disordered stretch occupies residues 332–383 (ARKSSSLVPTKSTKSGNSEVKKTETVVEEPAKTQPKPAPAADDGFFGEMYAD). A compositionally biased stretch (basic and acidic residues) spans 350 to 362 (EVKKTETVVEEPA). Positions 363-372 (KTQPKPAPAA) are enriched in low complexity.

It belongs to the MIP/aquaporin (TC 1.A.8) family.

It localises to the membrane. It catalyses the reaction H2O(in) = H2O(out). In terms of biological role, water channel required to facilitate the transport of water across membranes. May play a role in the vegetative growth. In Botryotinia fuckeliana (strain B05.10) (Noble rot fungus), this protein is Aquaporin-5.